Reading from the N-terminus, the 478-residue chain is Protein nucleotidyltransferase YdiU (478 aa).

8 residues coordinate ATP: glycine 84, glycine 86, arginine 87, lysine 107, aspartate 119, glycine 120, arginine 170, and arginine 177. Aspartate 246 serves as the catalytic Proton acceptor. Positions 247 and 256 each coordinate Mg(2+). Aspartate 256 provides a ligand contact to ATP.

This sequence belongs to the SELO family. Mg(2+) is required as a cofactor. Mn(2+) serves as cofactor.

It carries out the reaction L-seryl-[protein] + ATP = 3-O-(5'-adenylyl)-L-seryl-[protein] + diphosphate. The catalysed reaction is L-threonyl-[protein] + ATP = 3-O-(5'-adenylyl)-L-threonyl-[protein] + diphosphate. It catalyses the reaction L-tyrosyl-[protein] + ATP = O-(5'-adenylyl)-L-tyrosyl-[protein] + diphosphate. The enzyme catalyses L-histidyl-[protein] + UTP = N(tele)-(5'-uridylyl)-L-histidyl-[protein] + diphosphate. It carries out the reaction L-seryl-[protein] + UTP = O-(5'-uridylyl)-L-seryl-[protein] + diphosphate. The catalysed reaction is L-tyrosyl-[protein] + UTP = O-(5'-uridylyl)-L-tyrosyl-[protein] + diphosphate. Functionally, nucleotidyltransferase involved in the post-translational modification of proteins. It can catalyze the addition of adenosine monophosphate (AMP) or uridine monophosphate (UMP) to a protein, resulting in modifications known as AMPylation and UMPylation. This is Protein nucleotidyltransferase YdiU from Escherichia coli O9:H4 (strain HS).